The primary structure comprises 390 residues: Levoglucosan dehydrogenase (390 aa).

NADH is bound by residues Phe13, Met14, Glu43, Thr81, Asn83, His86, Glu103, Lys104, Ala130, and Asn132. Lys104 lines the levoglucosan pocket. Residues Tyr133 and Gln163 each coordinate levoglucosan. Residues Trp175 and Arg176 each coordinate NADH. Arg176, Asp189, and His193 together coordinate levoglucosan. Tyr335 contacts NADH.

The protein belongs to the Gfo/Idh/MocA family. As to quaternary structure, homotetramer.

The enzyme catalyses levoglucosan + NAD(+) = 3-dehydrolevoglucosan + NADH + H(+). Its function is as follows. Catalyzes the oxidation of levoglucosan (1,6-anhydro-beta-D-glucose, LG) to 3-dehydrolevoglucosan (3-keto-LG). Exhibits high substrate specificity toward levoglucosan and NAD(+) for the oxidative reaction. Exhibits weak activities (about 4% compared with that of LG) toward L-sorbose and 1,5-anhydro-D-glucitol, and activity toward D-xylose is also detectable (1.7%). Can also efficiently catalyzes the NADH-dependent reduction (reverse reaction) of 3-keto-LG. The chain is Levoglucosan dehydrogenase from Pseudarthrobacter phenanthrenivorans (strain DSM 18606 / JCM 16027 / LMG 23796 / Sphe3) (Arthrobacter phenanthrenivorans).